Here is a 262-residue protein sequence, read N- to C-terminus: Putative hydro-lyase BLi00500/BL02808 (262 aa).

Belongs to the D-glutamate cyclase family.

This Bacillus licheniformis (strain ATCC 14580 / DSM 13 / JCM 2505 / CCUG 7422 / NBRC 12200 / NCIMB 9375 / NCTC 10341 / NRRL NRS-1264 / Gibson 46) protein is Putative hydro-lyase BLi00500/BL02808.